We begin with the raw amino-acid sequence, 457 residues long: Ribulose bisphosphate carboxylase large chain (457 aa).

Positions Met1–Ser2 are excised as a propeptide. Pro3 carries the N-acetylproline modification. Lys14 bears the N6,N6,N6-trimethyllysine mark. Residues Asn123 and Thr173 each contribute to the substrate site. Lys175 acts as the Proton acceptor in catalysis. Residue Lys177 participates in substrate binding. Positions 201, 203, and 204 each coordinate Mg(2+). Lys201 bears the N6-carboxylysine mark. Residue His294 is the Proton acceptor of the active site. Substrate-binding residues include Arg295, His327, and Ser379.

Belongs to the RuBisCO large chain family. Type I subfamily. In terms of assembly, heterohexadecamer of 8 large chains and 8 small chains; disulfide-linked. The disulfide link is formed within the large subunit homodimers. It depends on Mg(2+) as a cofactor. In terms of processing, the disulfide bond which can form in the large chain dimeric partners within the hexadecamer appears to be associated with oxidative stress and protein turnover.

It is found in the plastid. The protein localises to the chloroplast. The catalysed reaction is 2 (2R)-3-phosphoglycerate + 2 H(+) = D-ribulose 1,5-bisphosphate + CO2 + H2O. It catalyses the reaction D-ribulose 1,5-bisphosphate + O2 = 2-phosphoglycolate + (2R)-3-phosphoglycerate + 2 H(+). Its function is as follows. RuBisCO catalyzes two reactions: the carboxylation of D-ribulose 1,5-bisphosphate, the primary event in carbon dioxide fixation, as well as the oxidative fragmentation of the pentose substrate in the photorespiration process. Both reactions occur simultaneously and in competition at the same active site. The protein is Ribulose bisphosphate carboxylase large chain of Phelline comosa.